Reading from the N-terminus, the 495-residue chain is Probable polyamine transporter At1g31830 (495 aa).

The next 11 membrane-spanning stretches (helical) occupy residues 49–69 (VSMLPLVFLIFYEVSGGPFGV), 79–99 (LLALLGFVIFPFIWSIPEALI), 112–132 (GYVVWVSSALGPFWGFQQGWM), 156–176 (VPALGSGLPRVASILVLTILL), 186–206 (IVGWVAVLMGVFSILPFAVMG), 230–250 (LYLNTLFWNLNYWDSISTLAG), 267–287 (VILVACSYIFPLLAGIGAIPL), 357–377 (TPLLGILFSASGVVLLSWLSF), 380–400 (IVAAENLLYCVGMILEFIAFV), 417–437 (IGTTGSILMCIPPTILICAVV), and 442–462 (LKVAAVSIVMMIIGFLIHPLL).

The protein belongs to the amino acid-polyamine-organocation (APC) superfamily. Polyamine:cation symporter (PHS) (TC 2.A.3.12) family.

It is found in the cell membrane. Its function is as follows. Probable cell membrane polyamine/proton symporter involved in the polyamine uptake in cells. This chain is Probable polyamine transporter At1g31830, found in Arabidopsis thaliana (Mouse-ear cress).